A 244-amino-acid polypeptide reads, in one-letter code: Phosphoadenosine 5'-phosphosulfate reductase (244 aa).

The active-site Nucleophile; cysteine thiosulfonate intermediate is the cysteine 239.

This sequence belongs to the PAPS reductase family. CysH subfamily.

The protein resides in the cytoplasm. The catalysed reaction is [thioredoxin]-disulfide + sulfite + adenosine 3',5'-bisphosphate + 2 H(+) = [thioredoxin]-dithiol + 3'-phosphoadenylyl sulfate. The protein operates within sulfur metabolism; hydrogen sulfide biosynthesis; sulfite from sulfate: step 3/3. In terms of biological role, catalyzes the formation of sulfite from phosphoadenosine 5'-phosphosulfate (PAPS) using thioredoxin as an electron donor. The chain is Phosphoadenosine 5'-phosphosulfate reductase from Photorhabdus laumondii subsp. laumondii (strain DSM 15139 / CIP 105565 / TT01) (Photorhabdus luminescens subsp. laumondii).